The chain runs to 407 residues: uncharacterized protein (407 aa).

12 helical membrane-spanning segments follow: residues 22–42 (IVSVVSFTFICYLTIGLPLAV), 51–71 (LGFSAIVAGAAISVQYFATLA), 101–121 (ALLLSAFAFARWPAASIGLLV), 126–146 (VLGIGESLVGTGAILWGIGRV), 154–174 (VISWNGIATYGALAIGAPVGV), 179–199 (ALIPAVLGMLVIALAALGYYL), 227–247 (GLGLALGSAGFGSIATFITLY), 258–278 (LSLTVFGTLFIGARLLFANTI), 286–306 (VAIVSFAFECAGLLMLWLAPV), 309–329 (VALVGAALTGFGFALIFPALG), 347–367 (AYSVFLDLSLGITGPLAGYVA), and 369–389 (AFGYPQVFLCAAVAAAAGVAL).

It belongs to the major facilitator superfamily. YhhS family.

It localises to the cell inner membrane. This is an uncharacterized protein from Burkholderia mallei (strain NCTC 10229).